Consider the following 431-residue polypeptide: Serine hydroxymethyltransferase 3 (431 aa).

Residues L131 and 135–137 each bind (6S)-5,6,7,8-tetrahydrofolate; that span reads GHL. K240 is modified (N6-(pyridoxal phosphate)lysine).

Belongs to the SHMT family. In terms of assembly, homodimer. Pyridoxal 5'-phosphate is required as a cofactor.

The protein localises to the cytoplasm. It carries out the reaction (6R)-5,10-methylene-5,6,7,8-tetrahydrofolate + glycine + H2O = (6S)-5,6,7,8-tetrahydrofolate + L-serine. It participates in one-carbon metabolism; tetrahydrofolate interconversion. It functions in the pathway amino-acid biosynthesis; glycine biosynthesis; glycine from L-serine: step 1/1. In terms of biological role, catalyzes the reversible interconversion of serine and glycine with tetrahydrofolate (THF) serving as the one-carbon carrier. This reaction serves as the major source of one-carbon groups required for the biosynthesis of purines, thymidylate, methionine, and other important biomolecules. Also exhibits THF-independent aldolase activity toward beta-hydroxyamino acids, producing glycine and aldehydes, via a retro-aldol mechanism. This is Serine hydroxymethyltransferase 3 from Colwellia psychrerythraea (strain 34H / ATCC BAA-681) (Vibrio psychroerythus).